The primary structure comprises 288 residues: N-glycosylase/DNA lyase (288 aa).

8-oxoguanine contacts are provided by Gln-35, Ser-62, and Trp-73. A helix-hairpin-helix region spans residues 134 to 203 (NPLVLVERPS…VACASISSEM (70 aa)). The Schiff-base intermediate with DNA role is filled by Lys-160. 2 residues coordinate 8-oxoguanine: Phe-164 and Pro-189. The active site involves Asp-191. Positions 238 and 242 each coordinate 8-oxoguanine.

Belongs to the archaeal N-glycosylase/DNA lyase (AGOG) family.

The catalysed reaction is 2'-deoxyribonucleotide-(2'-deoxyribose 5'-phosphate)-2'-deoxyribonucleotide-DNA = a 3'-end 2'-deoxyribonucleotide-(2,3-dehydro-2,3-deoxyribose 5'-phosphate)-DNA + a 5'-end 5'-phospho-2'-deoxyribonucleoside-DNA + H(+). DNA repair enzyme that is part of the base excision repair (BER) pathway; protects from oxidative damage by removing the major product of DNA oxidation, 8-oxoguanine (GO), from single- and double-stranded DNA substrates. This chain is N-glycosylase/DNA lyase, found in Aeropyrum pernix (strain ATCC 700893 / DSM 11879 / JCM 9820 / NBRC 100138 / K1).